Reading from the N-terminus, the 165-residue chain is Large ribosomal subunit protein uL10 (165 aa).

This sequence belongs to the universal ribosomal protein uL10 family. As to quaternary structure, part of the ribosomal stalk of the 50S ribosomal subunit. The N-terminus interacts with L11 and the large rRNA to form the base of the stalk. The C-terminus forms an elongated spine to which L12 dimers bind in a sequential fashion forming a multimeric L10(L12)X complex.

In terms of biological role, forms part of the ribosomal stalk, playing a central role in the interaction of the ribosome with GTP-bound translation factors. The polypeptide is Large ribosomal subunit protein uL10 (Borrelia turicatae (strain 91E135)).